The primary structure comprises 273 residues: Formamidopyrimidine-DNA glycosylase (273 aa).

The active-site Schiff-base intermediate with DNA is Pro-2. The active-site Proton donor is Glu-3. The Proton donor; for beta-elimination activity role is filled by Lys-58. Residues His-91 and Arg-110 each contribute to the DNA site. The FPG-type zinc finger occupies 238–272 (QVYGKTGQPCPRCASMIVKIKLGGRGTHLCPHCQK). The Proton donor; for delta-elimination activity role is filled by Arg-262.

This sequence belongs to the FPG family. Monomer. Requires Zn(2+) as cofactor.

It catalyses the reaction Hydrolysis of DNA containing ring-opened 7-methylguanine residues, releasing 2,6-diamino-4-hydroxy-5-(N-methyl)formamidopyrimidine.. It carries out the reaction 2'-deoxyribonucleotide-(2'-deoxyribose 5'-phosphate)-2'-deoxyribonucleotide-DNA = a 3'-end 2'-deoxyribonucleotide-(2,3-dehydro-2,3-deoxyribose 5'-phosphate)-DNA + a 5'-end 5'-phospho-2'-deoxyribonucleoside-DNA + H(+). Functionally, involved in base excision repair of DNA damaged by oxidation or by mutagenic agents. Acts as a DNA glycosylase that recognizes and removes damaged bases. Has a preference for oxidized purines, such as 7,8-dihydro-8-oxoguanine (8-oxoG). Has AP (apurinic/apyrimidinic) lyase activity and introduces nicks in the DNA strand. Cleaves the DNA backbone by beta-delta elimination to generate a single-strand break at the site of the removed base with both 3'- and 5'-phosphates. The protein is Formamidopyrimidine-DNA glycosylase of Streptococcus thermophilus (strain CNRZ 1066).